We begin with the raw amino-acid sequence, 206 residues long: MDEDVLTTLKILIIGESGVGKSSLLLRFTDDTFDPELAATIGVDFKVKTISVDGNKAKLAIWDTAGQERFRTLTPSYYRGAQGVILVYDVTRRDTFVKLDNWLNELETYCTRNDIVNMLVGNKIDKENREVDRNEGLKFARKHSMLFIEASAKTCDGVQCAFEELVEKIIQTPGLWESENQNKGVKLSHREESRGGGACGGYCSVL.

M1 is modified (N-acetylmethionine). 11 residues coordinate GTP: S17, G20, K21, S22, S23, D34, P35, T40, G66, K123, and D125. A Mg(2+)-binding site is contributed by S22. Short sequence motifs (switch) lie at residues 31 to 45 (DTFD…GVDF) and 63 to 80 (DTAG…YYRG). Residue T40 coordinates Mg(2+). At S144 the chain carries Phosphoserine. A152 lines the GTP pocket. Residue C199 is the site of S-palmitoyl cysteine attachment. Cysteine methyl ester is present on C203. C203 carries S-geranylgeranyl cysteine lipidation. A propeptide spans 204-206 (SVL) (removed in mature form).

Belongs to the small GTPase superfamily. Rab family. As to quaternary structure, interacts (in GTP-bound form) with ZFYVE1. Interacts with ZW10 and this interaction is enhanced in the presence of ZFYVE1. Interacts with BSCL2. Mg(2+) is required as a cofactor. As to expression, expression is high in the brain, moderate in the pituitary, and low in the liver. Detected in all tissues. Highly enriched on apical endocytic structures in polarized epithelial cells of kidney proximal tubules. Detected on both the apical and basolateral domains in epithelial cells of the intestine.

Its subcellular location is the endoplasmic reticulum membrane. The protein resides in the golgi apparatus. It is found in the cis-Golgi network membrane. The protein localises to the lipid droplet. It localises to the apical cell membrane. The catalysed reaction is GTP + H2O = GDP + phosphate + H(+). Its activity is regulated as follows. Regulated by guanine nucleotide exchange factor (GEF) RAB3GAP1-RAB3GAP2 complex at the cis-Golgi membrane which promotes the exchange of bound GDP for free GTP. Regulated by GTPase activating protein (GAP) TBC1D20 at the ER membrane which increases the GTP hydrolysis activity. Inhibited by GDP dissociation inhibitors (GDIs) which prevent Rab-GDP dissociation. Its function is as follows. The small GTPases Rab are key regulators of intracellular membrane trafficking, from the formation of transport vesicles to their fusion with membranes. Rabs cycle between an inactive GDP-bound form and an active GTP-bound form that is able to recruit to membranes different sets of downstream effectors directly responsible for vesicle formation, movement, tethering and fusion. RAB18 is required for the localization of ZFYVE1 to lipid droplets and for its function in mediating the formation of endoplasmic reticulum-lipid droplets (ER-LD) contacts. Also required for maintaining endoplasmic reticulum structure. Plays a role in apical endocytosis/recycling. Plays a key role in eye and brain development and neurodegeneration. The polypeptide is Ras-related protein Rab-18 (Mus musculus (Mouse)).